Here is a 208-residue protein sequence, read N- to C-terminus: 7-carboxy-7-deazaguanine synthase (208 aa).

Substrate contacts are provided by residues 23-25 (LQG) and Arg38. The Radical SAM core domain occupies 29–208 (WAGGNAFFIR…LQTHKYLGVR (180 aa)). [4Fe-4S] cluster is bound by residues Cys42, Cys46, and Cys49. Thr83 is a binding site for substrate. S-adenosyl-L-methionine is bound by residues Gly85 and 126–128 (SPK).

Belongs to the radical SAM superfamily. 7-carboxy-7-deazaguanine synthase family. In terms of assembly, homodimer. [4Fe-4S] cluster is required as a cofactor. It depends on S-adenosyl-L-methionine as a cofactor. Requires Mg(2+) as cofactor.

The catalysed reaction is 6-carboxy-5,6,7,8-tetrahydropterin + H(+) = 7-carboxy-7-deazaguanine + NH4(+). It participates in purine metabolism; 7-cyano-7-deazaguanine biosynthesis. Functionally, catalyzes the complex heterocyclic radical-mediated conversion of 6-carboxy-5,6,7,8-tetrahydropterin (CPH4) to 7-carboxy-7-deazaguanine (CDG), a step common to the biosynthetic pathways of all 7-deazapurine-containing compounds. This Synechocystis sp. (strain ATCC 27184 / PCC 6803 / Kazusa) protein is 7-carboxy-7-deazaguanine synthase.